A 73-amino-acid chain; its full sequence is Gastricsin (73 aa).

A propeptide spans 1–43 (SVIKVPLKKLKSIRQAMKEKGLLEEFLKTHKYDPAQRYRIGDI) (activation peptide). Residues 57–73 (YFGEISIGTPPQNFLVL) enclose the Peptidase A1 domain.

It belongs to the peptidase A1 family.

It localises to the secreted. It carries out the reaction More restricted specificity than pepsin A, but shows preferential cleavage at Tyr-|-Xaa bonds. High activity on hemoglobin.. Hydrolyzes a variety of proteins. The sequence is that of Gastricsin (PGC) from Sus scrofa (Pig).